A 64-amino-acid chain; its full sequence is Beta-defensin 1 (64 aa).

Residues 1–20 (MRLHRLLLVFLLMVLLPVPG) form the signal peptide. A propeptide spanning residues 21–23 (LLK) is cleaved from the precursor. 3 disulfide bridges follow: Cys-31/Cys-60, Cys-38/Cys-53, and Cys-43/Cys-61.

The protein belongs to the beta-defensin family. Monomer. Homodimer.

The protein resides in the secreted. Its subcellular location is the membrane. Has bactericidal activity. May act as a ligand for C-C chemokine receptor CCR6. Positively regulates the sperm motility and bactericidal activity in a CCR6-dependent manner. Binds to CCR6 and triggers Ca2+ mobilization in the sperm which is important for its motility. The sequence is that of Beta-defensin 1 (DEFB1) from Sus scrofa (Pig).